Reading from the N-terminus, the 240-residue chain is Ribonuclease 3 (240 aa).

In terms of domain architecture, RNase III spans 9–141 (VEELQKRLGV…LLAALYLDQG (133 aa)). Mg(2+) is bound at residue Glu-54. Residue Asp-58 is part of the active site. Residues Asp-127 and Glu-130 each coordinate Mg(2+). Glu-130 is a catalytic residue. Residues 168–237 (DYKTALQEIV…ARKAYEKLVA (70 aa)) enclose the DRBM domain.

The protein belongs to the ribonuclease III family. Homodimer. It depends on Mg(2+) as a cofactor.

It is found in the cytoplasm. It carries out the reaction Endonucleolytic cleavage to 5'-phosphomonoester.. Functionally, digests double-stranded RNA. Involved in the processing of primary rRNA transcript to yield the immediate precursors to the large and small rRNAs (23S and 16S). Processes some mRNAs, and tRNAs when they are encoded in the rRNA operon. Processes pre-crRNA and tracrRNA of type II CRISPR loci if present in the organism. The chain is Ribonuclease 3 from Thermotoga neapolitana (strain ATCC 49049 / DSM 4359 / NBRC 107923 / NS-E).